A 585-amino-acid chain; its full sequence is 2-succinyl-5-enolpyruvyl-6-hydroxy-3-cyclohexene-1-carboxylate synthase (585 aa).

Belongs to the TPP enzyme family. MenD subfamily. As to quaternary structure, homodimer. Mg(2+) is required as a cofactor. The cofactor is Mn(2+). Requires thiamine diphosphate as cofactor.

It catalyses the reaction isochorismate + 2-oxoglutarate + H(+) = 5-enolpyruvoyl-6-hydroxy-2-succinyl-cyclohex-3-ene-1-carboxylate + CO2. The protein operates within quinol/quinone metabolism; 1,4-dihydroxy-2-naphthoate biosynthesis; 1,4-dihydroxy-2-naphthoate from chorismate: step 2/7. Its pathway is cofactor biosynthesis; phylloquinone biosynthesis. Functionally, catalyzes the thiamine diphosphate-dependent decarboxylation of 2-oxoglutarate and the subsequent addition of the resulting succinic semialdehyde-thiamine pyrophosphate anion to isochorismate to yield 2-succinyl-5-enolpyruvyl-6-hydroxy-3-cyclohexene-1-carboxylate (SEPHCHC). The sequence is that of 2-succinyl-5-enolpyruvyl-6-hydroxy-3-cyclohexene-1-carboxylate synthase from Crocosphaera subtropica (strain ATCC 51142 / BH68) (Cyanothece sp. (strain ATCC 51142)).